We begin with the raw amino-acid sequence, 211 residues long: Ribosomal RNA small subunit methyltransferase G (211 aa).

S-adenosyl-L-methionine contacts are provided by residues Gly75, Leu80, 130-131, and Arg145; that span reads VE.

This sequence belongs to the methyltransferase superfamily. RNA methyltransferase RsmG family.

The protein localises to the cytoplasm. The enzyme catalyses guanosine(527) in 16S rRNA + S-adenosyl-L-methionine = N(7)-methylguanosine(527) in 16S rRNA + S-adenosyl-L-homocysteine. In terms of biological role, specifically methylates the N7 position of guanine in position 527 of 16S rRNA. The polypeptide is Ribosomal RNA small subunit methyltransferase G (Aromatoleum aromaticum (strain DSM 19018 / LMG 30748 / EbN1) (Azoarcus sp. (strain EbN1))).